The primary structure comprises 198 residues: UPF0301 protein BDI_1431 (198 aa).

The protein belongs to the UPF0301 (AlgH) family.

The polypeptide is UPF0301 protein BDI_1431 (Parabacteroides distasonis (strain ATCC 8503 / DSM 20701 / CIP 104284 / JCM 5825 / NCTC 11152)).